The chain runs to 956 residues: Ubiquitin carboxyl-terminal hydrolase CYLD (956 aa).

The interval 106–593 (CEERFSLFKN…LEIMIGKKKG (488 aa)) is interaction with TRIP. CAP-Gly domains follow at residues 153–198 (LAER…VFVA) and 253–286 (DVLP…VQLC). The tract at residues 309-353 (SVTQERRPPKLAFMSRGVGDKGSSSHNKPKATGSTSDPGNRNRSE) is disordered. A compositionally biased stretch (polar residues) spans 330-349 (GSSSHNKPKATGSTSDPGNR). Position 387 is a phosphoserine (S387). The segment at 392-411 (STDFDRSSPPLQPPPVNSLT) is disordered. The tract at residues 394 to 469 (DFDRSSPPLQ…LAMPPGNSHG (76 aa)) is interaction with TRAF2. 2 positions are modified to phosphoserine: S418 and S422. Residues 470 to 554 (LEVGSLAEVK…FASLQPVSNQ (85 aa)) are interaction with IKBKG/NEMO. The CAP-Gly 3 domain maps to 492–535 (GQPPGLNEVLAGLELEDECAGCTDGTFRGTRYFTCALKKALFVK). In terms of domain architecture, USP spans 592–950 (KGIQGHYNSC…DAYMCMYQSP (359 aa)). The active-site Nucleophile is the C601. Residues 781–833 (LEDTPRQCRICGGLAMYECRECYDDPDISAGKIKQFCKTCNTQVHLHPKRLNH) form a B-box region. Zn(2+) contacts are provided by C788, C791, C799, C802, C817, C820, H825, and H833. H871 serves as the catalytic Proton acceptor.

Belongs to the peptidase C19 family. In terms of assembly, interacts (via CAP-Gly domain) with IKBKG/NEMO (via proline-rich C-terminal region). Interacts with TRAF2 and TRIP. Interacts with PLK1, DVL1, DVL3, MAVS, TBK1, IKKE and RIGI. Interacts (via CAP-Gly domain) with microtubules. Interacts with HDAC6 and BCL3. Interacts with MAP3K7. Identified in a complex with TRAF6 and SQSTM1. Interacts with OPTN and SQSTM1. Interacts with CEP350. Interacts with RNF31; the interaction is indirect and is mediated via SPATA2. Interacts with SPATA2 (via the PUB domain); the interaction is direct and recruits CYLD to the LUBAC complex, thereby regulating TNF-alpha-induced necroptosis. Post-translationally, ubiquitinated. Polyubiquitinated in hepatocytes treated with palmitic acid. Ubiquitination is mediated by E3 ligase TRIM47 and leads to proteasomal degradation. In terms of processing, phosphorylated on several serine residues by IKKA and/or IKKB in response to immune stimuli. Phosphorylation requires IKBKG. Phosphorylation abolishes TRAF2 deubiquitination, interferes with the activation of Jun kinases, and strongly reduces CD40-dependent gene activation by NF-kappa-B. In terms of tissue distribution, detected in fetal brain, testis, and skeletal muscle, and at a lower level in adult brain, leukocytes, liver, heart, kidney, spleen, ovary and lung. Isoform 2 is found in all tissues except kidney.

The protein localises to the cytoplasm. The protein resides in the perinuclear region. It is found in the cytoskeleton. Its subcellular location is the cell membrane. It localises to the microtubule organizing center. The protein localises to the centrosome. The protein resides in the spindle. It is found in the cilium basal body. It catalyses the reaction Thiol-dependent hydrolysis of ester, thioester, amide, peptide and isopeptide bonds formed by the C-terminal Gly of ubiquitin (a 76-residue protein attached to proteins as an intracellular targeting signal).. With respect to regulation, inhibited by phosphorylation at serine residues. Deubiquitinase that specifically cleaves 'Lys-63'- and linear 'Met-1'-linked polyubiquitin chains and is involved in NF-kappa-B activation and TNF-alpha-induced necroptosis. Negatively regulates NF-kappa-B activation by deubiquitinating upstream signaling factors. Contributes to the regulation of cell survival, proliferation and differentiation via its effects on NF-kappa-B activation. Negative regulator of Wnt signaling. Inhibits HDAC6 and thereby promotes acetylation of alpha-tubulin and stabilization of microtubules. Plays a role in the regulation of microtubule dynamics, and thereby contributes to the regulation of cell proliferation, cell polarization, cell migration, and angiogenesis. Required for normal cell cycle progress and normal cytokinesis. Inhibits nuclear translocation of NF-kappa-B. Plays a role in the regulation of inflammation and the innate immune response, via its effects on NF-kappa-B activation. Dispensable for the maturation of intrathymic natural killer cells, but required for the continued survival of immature natural killer cells. Negatively regulates TNFRSF11A signaling and osteoclastogenesis. Involved in the regulation of ciliogenesis, allowing ciliary basal bodies to migrate and dock to the plasma membrane; this process does not depend on NF-kappa-B activation. Ability to remove linear ('Met-1'-linked) polyubiquitin chains regulates innate immunity and TNF-alpha-induced necroptosis: recruited to the LUBAC complex via interaction with SPATA2 and restricts linear polyubiquitin formation on target proteins. Regulates innate immunity by restricting linear polyubiquitin formation on RIPK2 in response to NOD2 stimulation. Involved in TNF-alpha-induced necroptosis by removing linear ('Met-1'-linked) polyubiquitin chains from RIPK1, thereby regulating the kinase activity of RIPK1. Negatively regulates intestinal inflammation by removing 'Lys-63' linked polyubiquitin chain of NLRP6, thereby reducing the interaction between NLRP6 and PYCARD/ASC and formation of the NLRP6 inflammasome. Does not catalyze deubiquitination of heterotypic 'Lys-63'-/'Lys-48'-linked branched ubiquitin chains. Removes 'Lys-63' linked polyubiquitin chain of MAP3K7, which inhibits phosphorylation and blocks downstream activation of the JNK-p38 kinase cascades. Also removes 'Lys-63'-linked polyubiquitin chains of MAP3K1 and MA3P3K3, which inhibit their interaction with MAP2K1 and MAP2K2. The protein is Ubiquitin carboxyl-terminal hydrolase CYLD of Homo sapiens (Human).